Reading from the N-terminus, the 562-residue chain is Sulfite reductase [NADPH] hemoprotein beta-component (562 aa).

The [4Fe-4S] cluster site is built by C426, C432, C471, and C475. C475 lines the siroheme pocket.

Belongs to the nitrite and sulfite reductase 4Fe-4S domain family. As to quaternary structure, alpha(8)-beta(8). The alpha component is a flavoprotein, the beta component is a hemoprotein. It depends on siroheme as a cofactor. Requires [4Fe-4S] cluster as cofactor.

It catalyses the reaction hydrogen sulfide + 3 NADP(+) + 3 H2O = sulfite + 3 NADPH + 4 H(+). Its pathway is sulfur metabolism; hydrogen sulfide biosynthesis; hydrogen sulfide from sulfite (NADPH route): step 1/1. Component of the sulfite reductase complex that catalyzes the 6-electron reduction of sulfite to sulfide. This is one of several activities required for the biosynthesis of L-cysteine from sulfate. This chain is Sulfite reductase [NADPH] hemoprotein beta-component, found in Shewanella denitrificans (strain OS217 / ATCC BAA-1090 / DSM 15013).